The following is a 469-amino-acid chain: Regulator of G-protein signaling 7 (469 aa).

A DEP domain is found at 37-112 (EKNGIPIRTV…DDGTFYRFQT (76 aa)). A phosphoserine mark is found at serine 229 and serine 241. The segment at 236-255 (DIRSHSPTHTPTPETKPPTE) is disordered. Threonine 243 bears the Phosphothreonine mark. In terms of domain architecture, G protein gamma spans 255–316 (EDELHQQIKY…LSDDTTFWEL (62 aa)). In terms of domain architecture, RGS spans 333–448 (GMDEALKDPV…IRSSAYQELL (116 aa)). Position 434 is a phosphoserine (serine 434).

Interacts with GNB5, forming the RGS7-GNB5 complex. Interacts with GPR158; promotes the GTPase activator activity of the RGS7-GNB5 complex in absence of glycine, in contrast GTPase activator activity of the RGS7-GNB5 complex is inhibited in presence of glycine. Interacts with GPR179. Interacts with PKD1; this prevents rapid proteasomal degradation. Interacts with RGS7BP, leading to regulate the subcellular location of the heterodimer formed with GNB5. Interacts (phosphorylated form) with 14-3-3 protein YWHAQ. Interacts with SNAPIN. Interacts with GNAI1. Interacts with GNAO1, GNAI3 and GNAZ. Post-translationally, palmitoylated. In terms of processing, ubiquitinated, leading to rapid proteasomal degradation. Phosphorylation and subsequent interaction with 14-3-3 proteins inhibits GAP activity. In terms of tissue distribution, detected in brain (at protein level).

The protein resides in the cytoplasm. The protein localises to the cytosol. It localises to the cell membrane. It is found in the membrane. In terms of biological role, GTPase activator component of the RGS7-GNB5 complex that regulates G protein-coupled receptor signaling cascades. The RGS7-GNB5 complex acts as an inhibitor signal transduction by promoting the GTPase activity of G protein alpha subunits, such as GNAO1, thereby driving them into their inactive GDP-bound form. May play a role in synaptic vesicle exocytosis. Glycine-dependent regulation of the RGS7-GNB5 complex by GPR158 affects mood and cognition via its ability to regulate neuronal excitability in L2/L3 pyramidal neurons of the prefrontal cortex. Modulates the activity of potassium channels that are activated by GNAO1 in response to muscarinic acetylcholine receptor M2/CHRM2 signaling. This chain is Regulator of G-protein signaling 7 (Rgs7), found in Mus musculus (Mouse).